The primary structure comprises 314 residues: tRNA pseudouridine synthase B (314 aa).

Catalysis depends on aspartate 47, which acts as the Nucleophile.

It belongs to the pseudouridine synthase TruB family. Type 1 subfamily.

It catalyses the reaction uridine(55) in tRNA = pseudouridine(55) in tRNA. In terms of biological role, responsible for synthesis of pseudouridine from uracil-55 in the psi GC loop of transfer RNAs. This is tRNA pseudouridine synthase B from Vibrio vulnificus (strain CMCP6).